A 344-amino-acid polypeptide reads, in one-letter code: Dihydroorotase (344 aa).

2 residues coordinate Zn(2+): His13 and His15. Residues 15-17 (HLR) and Asn41 each bind substrate. Lys98, His135, and His173 together coordinate Zn(2+). At Lys98 the chain carries N6-carboxylysine. His135 serves as a coordination point for substrate. Leu218 serves as a coordination point for substrate. Asp247 serves as a coordination point for Zn(2+). The active site involves Asp247. 2 residues coordinate substrate: His251 and Ala263.

This sequence belongs to the metallo-dependent hydrolases superfamily. DHOase family. Class II DHOase subfamily. Homodimer. The cofactor is Zn(2+).

It carries out the reaction (S)-dihydroorotate + H2O = N-carbamoyl-L-aspartate + H(+). The protein operates within pyrimidine metabolism; UMP biosynthesis via de novo pathway; (S)-dihydroorotate from bicarbonate: step 3/3. Its function is as follows. Catalyzes the reversible cyclization of carbamoyl aspartate to dihydroorotate. The polypeptide is Dihydroorotase (Neisseria gonorrhoeae (strain ATCC 700825 / FA 1090)).